The following is a 184-amino-acid chain: ATP synthase subunit b, chloroplastic (184 aa).

The chain crosses the membrane as a helical span at residues 4-24; it reads IINLVIFSGYWPIAGNFGLNT.

The protein belongs to the ATPase B chain family. In terms of assembly, F-type ATPases have 2 components, F(1) - the catalytic core - and F(0) - the membrane proton channel. F(1) has five subunits: alpha(3), beta(3), gamma(1), delta(1), epsilon(1). F(0) has four main subunits: a(1), b(1), b'(1) and c(10-14). The alpha and beta chains form an alternating ring which encloses part of the gamma chain. F(1) is attached to F(0) by a central stalk formed by the gamma and epsilon chains, while a peripheral stalk is formed by the delta, b and b' chains.

The protein localises to the plastid. Its subcellular location is the chloroplast thylakoid membrane. Functionally, f(1)F(0) ATP synthase produces ATP from ADP in the presence of a proton or sodium gradient. F-type ATPases consist of two structural domains, F(1) containing the extramembraneous catalytic core and F(0) containing the membrane proton channel, linked together by a central stalk and a peripheral stalk. During catalysis, ATP synthesis in the catalytic domain of F(1) is coupled via a rotary mechanism of the central stalk subunits to proton translocation. Its function is as follows. Component of the F(0) channel, it forms part of the peripheral stalk, linking F(1) to F(0). The sequence is that of ATP synthase subunit b, chloroplastic from Physcomitrium patens (Spreading-leaved earth moss).